Reading from the N-terminus, the 363-residue chain is Biotin synthase (363 aa).

Ser13, Ser14, and Ser17 each carry phosphoserine. Positions 54–276 constitute a Radical SAM core domain; the sequence is KKVQQCTLLS…IATARICMPK (223 aa). [4Fe-4S] cluster contacts are provided by Cys69, Cys73, and Cys76. [2Fe-2S] cluster is bound by residues Cys113, Cys146, Cys206, and Arg280. The disordered stretch occupies residues 337–363; that stretch reads EYGTSTEGEDGTFTLPPKERLAPSPSL.

Belongs to the radical SAM superfamily. Biotin synthase family. [4Fe-4S] cluster is required as a cofactor. It depends on [2Fe-2S] cluster as a cofactor.

It carries out the reaction (4R,5S)-dethiobiotin + (sulfur carrier)-SH + 2 reduced [2Fe-2S]-[ferredoxin] + 2 S-adenosyl-L-methionine = (sulfur carrier)-H + biotin + 2 5'-deoxyadenosine + 2 L-methionine + 2 oxidized [2Fe-2S]-[ferredoxin]. Its pathway is cofactor biosynthesis; biotin biosynthesis; biotin from 7,8-diaminononanoate: step 2/2. Catalyzes the last step of biotin biosynthesis, the conversion of dethiobiotin to biotin. This chain is Biotin synthase (bio2), found in Schizosaccharomyces pombe (strain 972 / ATCC 24843) (Fission yeast).